Reading from the N-terminus, the 290-residue chain is 4-hydroxy-tetrahydrodipicolinate synthase (290 aa).

Threonine 44 contributes to the pyruvate binding site. Tyrosine 132 serves as the catalytic Proton donor/acceptor. Lysine 160 (schiff-base intermediate with substrate) is an active-site residue. Isoleucine 202 provides a ligand contact to pyruvate.

This sequence belongs to the DapA family. As to quaternary structure, homotetramer; dimer of dimers.

The protein resides in the cytoplasm. It catalyses the reaction L-aspartate 4-semialdehyde + pyruvate = (2S,4S)-4-hydroxy-2,3,4,5-tetrahydrodipicolinate + H2O + H(+). Its pathway is amino-acid biosynthesis; L-lysine biosynthesis via DAP pathway; (S)-tetrahydrodipicolinate from L-aspartate: step 3/4. Its function is as follows. Catalyzes the condensation of (S)-aspartate-beta-semialdehyde [(S)-ASA] and pyruvate to 4-hydroxy-tetrahydrodipicolinate (HTPA). In Geobacter sulfurreducens (strain ATCC 51573 / DSM 12127 / PCA), this protein is 4-hydroxy-tetrahydrodipicolinate synthase.